Consider the following 381-residue polypeptide: MAAAVVVAGEAAAAAGAGGKKRGASRSWILFDAAGEERVLDADKYAIMHRVDINARDLRILDPLLSYPSTILGRERAIVLNLEHIKAIITAEEVLLRDPLDDNVIPVVEELRRRLAPSSATQHDVEGAEEDESPFEFRALEVTLEAICSFLGARTTELESAAYPALDELTSKISSRNLDRVRKLKSGMTRLNARVQKVRDELEQLLDDDDDMADLYLSRKLAGAASPVSGSGGPNWFPASPTIGSKISRASRASAPTIHGNENDVEELEMLLEAYFMQIDGTLNKLTTLREYIDDTEDYINIQLDNHRNQLIQLELFLSSGTVCLSLYSLVAGIFGMNIPYTWNDNHGYVFKWVVLVSGLFCAFMFVSIVAYARHKGLVGS.

2 helical membrane-spanning segments follow: residues 316-336 (LFLS…GIFG) and 353-373 (WVVL…VAYA). Positions 336–338 (GMN) match the Required for magnesium transport activity motif.

It belongs to the CorA metal ion transporter (MIT) (TC 1.A.35.5) family.

It is found in the membrane. Magnesium transporter that may mediate the influx of magnesium. The protein is Magnesium transporter MRS2-I (MRS2-I) of Oryza sativa subsp. indica (Rice).